The primary structure comprises 347 residues: Probable dual-specificity RNA methyltransferase RlmN (347 aa).

The active-site Proton acceptor is the E90. Residues 96 to 326 form the Radical SAM core domain; it reads YKHGNSICIS…VTVRREMGSD (231 aa). Cysteines 103 and 331 form a disulfide. 3 residues coordinate [4Fe-4S] cluster: C110, C114, and C117. S-adenosyl-L-methionine contacts are provided by residues 157–158, S189, 212–214, and N288; these read GE and SLH. C331 serves as the catalytic S-methylcysteine intermediate.

It belongs to the radical SAM superfamily. RlmN family. [4Fe-4S] cluster is required as a cofactor.

Its subcellular location is the cytoplasm. It catalyses the reaction adenosine(2503) in 23S rRNA + 2 reduced [2Fe-2S]-[ferredoxin] + 2 S-adenosyl-L-methionine = 2-methyladenosine(2503) in 23S rRNA + 5'-deoxyadenosine + L-methionine + 2 oxidized [2Fe-2S]-[ferredoxin] + S-adenosyl-L-homocysteine. The catalysed reaction is adenosine(37) in tRNA + 2 reduced [2Fe-2S]-[ferredoxin] + 2 S-adenosyl-L-methionine = 2-methyladenosine(37) in tRNA + 5'-deoxyadenosine + L-methionine + 2 oxidized [2Fe-2S]-[ferredoxin] + S-adenosyl-L-homocysteine. In terms of biological role, specifically methylates position 2 of adenine 2503 in 23S rRNA and position 2 of adenine 37 in tRNAs. This chain is Probable dual-specificity RNA methyltransferase RlmN, found in Clostridium botulinum (strain Alaska E43 / Type E3).